We begin with the raw amino-acid sequence, 419 residues long: Gamma-glutamyl phosphate reductase (419 aa).

Belongs to the gamma-glutamyl phosphate reductase family.

The protein localises to the cytoplasm. The enzyme catalyses L-glutamate 5-semialdehyde + phosphate + NADP(+) = L-glutamyl 5-phosphate + NADPH + H(+). The protein operates within amino-acid biosynthesis; L-proline biosynthesis; L-glutamate 5-semialdehyde from L-glutamate: step 2/2. In terms of biological role, catalyzes the NADPH-dependent reduction of L-glutamate 5-phosphate into L-glutamate 5-semialdehyde and phosphate. The product spontaneously undergoes cyclization to form 1-pyrroline-5-carboxylate. The protein is Gamma-glutamyl phosphate reductase of Bordetella parapertussis (strain 12822 / ATCC BAA-587 / NCTC 13253).